Here is a 151-residue protein sequence, read N- to C-terminus: Transcription antitermination protein NusB (151 aa).

Belongs to the NusB family.

Its function is as follows. Involved in transcription antitermination. Required for transcription of ribosomal RNA (rRNA) genes. Binds specifically to the boxA antiterminator sequence of the ribosomal RNA (rrn) operons. The polypeptide is Transcription antitermination protein NusB (Photobacterium profundum (strain SS9)).